The following is a 107-amino-acid chain: Transmembrane protein 213 (107 aa).

The first 27 residues, 1–27 (MQRLPAATRATLILSLAFASLHSACSA), serve as a signal peptide directing secretion. The Extracellular segment spans residues 28–70 (EASSSNSSSLTAHHPDPGTLEQCLNVDFCPQAARCCRTGVDEY). A helical membrane pass occupies residues 71–91 (GWIAAAVGWSLWFLTLILLCV). Residues 92 to 107 (DKLMKLTPDEPKDLQA) lie on the Cytoplasmic side of the membrane.

Its subcellular location is the membrane. The chain is Transmembrane protein 213 (TMEM213) from Homo sapiens (Human).